Reading from the N-terminus, the 247-residue chain is Fibroblast growth factor 14 (247 aa).

Disordered regions lie at residues 1–37 (MAAA…SKNR) and 216–247 (ETVP…CKTT). Residues 15-25 (QAREQHWDRPS) show a composition bias toward basic and acidic residues.

It belongs to the heparin-binding growth factors family. As to quaternary structure, interacts with SCN8A. As to expression, brain and testis; widely distributed in the developing nervous system. In adult, high levels in the granular layer of the cerebellum, less in hippocampus and olfactory bulb.

The protein localises to the nucleus. Functionally, probably involved in nervous system development and function. The chain is Fibroblast growth factor 14 (Fgf14) from Mus musculus (Mouse).